Consider the following 269-residue polypeptide: Mitochondrial acidic protein mam33 (269 aa).

This sequence belongs to the MAM33 family.

It localises to the cytoplasm. The protein resides in the mitochondrion matrix. This is Mitochondrial acidic protein mam33 from Schizosaccharomyces pombe (strain 972 / ATCC 24843) (Fission yeast).